Here is a 433-residue protein sequence, read N- to C-terminus: Histidine--tRNA ligase (433 aa).

The protein belongs to the class-II aminoacyl-tRNA synthetase family. As to quaternary structure, homodimer.

The protein resides in the cytoplasm. It carries out the reaction tRNA(His) + L-histidine + ATP = L-histidyl-tRNA(His) + AMP + diphosphate + H(+). In Blochmanniella floridana, this protein is Histidine--tRNA ligase.